The following is a 389-amino-acid chain: Phosphopentomutase (389 aa).

Mn(2+) is bound by residues aspartate 10, aspartate 282, histidine 287, aspartate 323, histidine 324, and histidine 335.

It belongs to the phosphopentomutase family. Mn(2+) serves as cofactor.

It localises to the cytoplasm. The enzyme catalyses 2-deoxy-alpha-D-ribose 1-phosphate = 2-deoxy-D-ribose 5-phosphate. It catalyses the reaction alpha-D-ribose 1-phosphate = D-ribose 5-phosphate. The protein operates within carbohydrate degradation; 2-deoxy-D-ribose 1-phosphate degradation; D-glyceraldehyde 3-phosphate and acetaldehyde from 2-deoxy-alpha-D-ribose 1-phosphate: step 1/2. Its function is as follows. Isomerase that catalyzes the conversion of deoxy-ribose 1-phosphate (dRib-1-P) and ribose 1-phosphate (Rib-1-P) to deoxy-ribose 5-phosphate (dRib-5-P) and ribose 5-phosphate (Rib-5-P), respectively. In Clostridium kluyveri (strain NBRC 12016), this protein is Phosphopentomutase.